Reading from the N-terminus, the 361-residue chain is Peptide chain release factor 1 (361 aa).

Residue glutamine 235 is modified to N5-methylglutamine.

Belongs to the prokaryotic/mitochondrial release factor family. In terms of processing, methylated by PrmC. Methylation increases the termination efficiency of RF1.

It localises to the cytoplasm. Its function is as follows. Peptide chain release factor 1 directs the termination of translation in response to the peptide chain termination codons UAG and UAA. The sequence is that of Peptide chain release factor 1 from Xanthomonas campestris pv. campestris (strain 8004).